The chain runs to 446 residues: DNA repair protein RadA (446 aa).

The C4-type zinc-finger motif lies at 10 to 27 (CQACGNQQSKWLGKCPDC). 96–103 (GSPGVGKS) lines the ATP pocket. The RadA KNRFG motif motif lies at 253–257 (KNRFG). The lon-protease-like stretch occupies residues 349–446 (DVFVNISGGV…KELSQVLEWM (98 aa)).

The protein belongs to the RecA family. RadA subfamily.

Its function is as follows. DNA-dependent ATPase involved in processing of recombination intermediates, plays a role in repairing DNA breaks. Stimulates the branch migration of RecA-mediated strand transfer reactions, allowing the 3' invading strand to extend heteroduplex DNA faster. Binds ssDNA in the presence of ADP but not other nucleotides, has ATPase activity that is stimulated by ssDNA and various branched DNA structures, but inhibited by SSB. Does not have RecA's homology-searching function. The chain is DNA repair protein RadA from Campylobacter jejuni subsp. jejuni serotype O:2 (strain ATCC 700819 / NCTC 11168).